Reading from the N-terminus, the 404-residue chain is MLPFQAARQRQFARVITFALAGFVFNTTEFIPVALLSDIAQSFAMPVSQTGLIITVYAWVVSLMSLPFMLLTAKAERRGLLIKLLVLFILSHLLSVIAWDFWVLVLARIGVALTHSIFWAITASLVIRVAPKDKKSQAIGLLAIGCSLAMILGLPLGRLIGQFFGWRATFAIIALIAIGILCLFYQLLPHLPSKNAGSLNSLPTLFKRPLLLGLYALTMIIISAHFTAYSYIEPFMLNISTMSHSMATFVLFVFGLSGITASLLFNRYYNAGPIRFILFSMGLLTATLLLLFIASQQTWTMFLLTFFWGIGIAGIGLGLQIRVLHLAPDATDVAMAIYSGIYNIGIGAGALLGNQVMQHYGLAYIGVAGALFAVFGLVLFILVQWKYGHLAPNKLSTEEKKKCG.

12 helical membrane passes run 15–35, 51–71, 85–105, 109–129, 137–157, 168–188, 209–229, 245–265, 276–296, 299–319, 333–353, and 363–383; these read VITF…PVAL, GLII…FMLL, LVLF…WVLV, IGVA…VIRV, QAIG…LPLG, ATFA…YQLL, PLLL…FTAY, SMAT…SLLF, FILF…IASQ, WTMF…GLGL, VAMA…ALLG, and AYIG…FILV.

This sequence belongs to the major facilitator superfamily. SotB (TC 2.A.1.2) family.

It localises to the cell inner membrane. In terms of biological role, involved in the efflux of sugars. The physiological role may be the reduction of the intracellular concentration of toxic sugars or sugar metabolites. This Pasteurella multocida (strain Pm70) protein is Probable sugar efflux transporter.